The primary structure comprises 769 residues: Dolichyl-phosphate-mannose--protein mannosyltransferase 2 (769 aa).

The tract at residues 1-44 is disordered; it reads MSTSVEPNETEALLRKQNDLSTTASIEEKYPHQQGEAAEDDDDT. Asparagine 8 carries N-linked (GlcNAc...) asparagine glycosylation. The helical transmembrane segment at 59–79 threads the bilayer; sequence SLKQVESILAPIVFTALSFFV. Asparagine 132 is a glycosylation site (N-linked (GlcNAc...) asparagine). 3 consecutive transmembrane segments (helical) span residues 152–169, 176–194, and 200–218; these read MRLF…LAYF, FSMF…ESSY, and FILL…VFCF. N-linked (GlcNAc...) asparagine glycosylation occurs at asparagine 226. 2 consecutive transmembrane segments (helical) span residues 252-272 and 288-308; these read VKMV…VDLW and HWFA…MLSF. Asparagine 324 carries N-linked (GlcNAc...) asparagine glycosylation. An MIR 1 domain is found at 342 to 397; that stretch reads PREVSMFHSVITLKNQGLSGGLLHSHVQTFPEGSKQQQVTTYGHKDSNNNWIFQRA. N-linked (GlcNAc...) asparagine glycosylation is found at asparagine 408, asparagine 453, and asparagine 462. MIR domains are found at residues 412-468 and 474-534; these read IEYI…VEIM and EDKM…IENN. Transmembrane regions (helical) follow at residues 615–635, 655–675, 679–699, and 718–738; these read TTWT…YYLI, FLMG…PFAI, VTYV…FCYE, and LLYL…FWYF.

This sequence belongs to the glycosyltransferase 39 family. As to quaternary structure, PMT1 and PMT2 form a functional heterodimer.

It is found in the endoplasmic reticulum membrane. The enzyme catalyses a di-trans,poly-cis-dolichyl beta-D-mannosyl phosphate + L-seryl-[protein] = 3-O-(alpha-D-mannosyl)-L-seryl-[protein] + a di-trans,poly-cis-dolichyl phosphate + H(+). It carries out the reaction a di-trans,poly-cis-dolichyl beta-D-mannosyl phosphate + L-threonyl-[protein] = 3-O-(alpha-D-mannosyl)-L-threonyl-[protein] + a di-trans,poly-cis-dolichyl phosphate + H(+). Its pathway is protein modification; protein glycosylation. In terms of biological role, protein mannosyltransferase (PMT) involved in hyphal growth and drug sensitivity. Transfers mannose from Dol-P-mannose to Ser or Thr residues on proteins. PMT1, PMT2 and PMT4 account for most of the protein-O-glycosylation activity, while PMT5 and PMT6 may specifically modulate a much narrower spectrum of target proteins. Essential protein that plays an important role in virulence. The chain is Dolichyl-phosphate-mannose--protein mannosyltransferase 2 from Candida albicans (strain SC5314 / ATCC MYA-2876) (Yeast).